The primary structure comprises 376 residues: Erythronate-4-phosphate dehydrogenase (376 aa).

The substrate site is built by S45 and T67. An NAD(+)-binding site is contributed by D147. The active site involves R209. D233 serves as a coordination point for NAD(+). The active site involves E238. H255 acts as the Proton donor in catalysis. G258 contacts NAD(+). Y259 is a substrate binding site.

The protein belongs to the D-isomer specific 2-hydroxyacid dehydrogenase family. PdxB subfamily. In terms of assembly, homodimer.

It localises to the cytoplasm. It carries out the reaction 4-phospho-D-erythronate + NAD(+) = (R)-3-hydroxy-2-oxo-4-phosphooxybutanoate + NADH + H(+). Its pathway is cofactor biosynthesis; pyridoxine 5'-phosphate biosynthesis; pyridoxine 5'-phosphate from D-erythrose 4-phosphate: step 2/5. Functionally, catalyzes the oxidation of erythronate-4-phosphate to 3-hydroxy-2-oxo-4-phosphonooxybutanoate. The sequence is that of Erythronate-4-phosphate dehydrogenase from Shewanella sp. (strain MR-7).